The sequence spans 281 residues: Transformer-2 protein homolog alpha (281 aa).

Residues 1–116 (MSDVEENNFE…TGSRANPDPN (116 aa)) form a disordered region. Ser2 carries the post-translational modification N-acetylserine. Residues Ser2 and Ser14 each carry the phosphoserine modification. The residue at position 24 (Thr24) is a Phosphothreonine. Residues 51–82 (RSRSKSRSRSRRHSHRRYTRSRSHSHRRRSRS) show a composition bias toward basic residues. Phosphoserine occurs at positions 80, 82, and 84. Thr86 is subject to Phosphothreonine. Over residues 90 to 108 (RRRRSRSHSPMSNRRRHTG) the composition is skewed to basic residues. Phosphoserine is present on residues Ser94 and Ser96. Positions 117 to 195 (TCLGVFGLSL…RRIRVDYSIT (79 aa)) constitute an RRM domain. Lys196 participates in a covalent cross-link: Glycyl lysine isopeptide (Lys-Gly) (interchain with G-Cter in SUMO2). Residues 196–223 (KRAHTPTPGIYMGRPTHSGGGGGGGGGG) are linker. Residues 199 to 281 (HTPTPGIYMG…RSRSYSPRRY (83 aa)) are disordered. Phosphothreonine is present on residues Thr200 and Thr202. The span at 213 to 231 (SGGGGGGGGGGGGGGGGGG) shows a compositional bias: gly residues. Arg233 is modified (omega-N-methylarginine). Basic and acidic residues predominate over residues 233 to 257 (RRRDSYYDRGYDRGYDRYEDYDYRR). Ser237 is subject to Phosphoserine. Basic residues predominate over residues 267 to 281 (YRSRSRSRSYSPRRY).

The protein belongs to the splicing factor SR family. As to quaternary structure, binds to A3 enhancer proteins SRp75, SRp55, SRp40 and SRp30. Interacts with ILDR1 (via C-terminus) and ILDR2. Post-translationally, phosphorylated in the RS domains. As to expression, expressed in inner ear.

The protein resides in the nucleus. Sequence-specific RNA-binding protein which participates in the control of pre-mRNA splicing. This chain is Transformer-2 protein homolog alpha, found in Mus musculus (Mouse).